The chain runs to 246 residues: Uridylate kinase (246 aa).

An ATP-binding site is contributed by 11-14 (KLSG). Gly53 serves as a coordination point for UMP. ATP-binding residues include Gly54 and Arg58. Residues Asp73 and 134–141 (TGNPYFTT) each bind UMP. Thr161, Tyr167, and Asp170 together coordinate ATP.

It belongs to the UMP kinase family. Homohexamer.

It localises to the cytoplasm. The enzyme catalyses UMP + ATP = UDP + ADP. It functions in the pathway pyrimidine metabolism; CTP biosynthesis via de novo pathway; UDP from UMP (UMPK route): step 1/1. Its activity is regulated as follows. Inhibited by UTP. Its function is as follows. Catalyzes the reversible phosphorylation of UMP to UDP. The chain is Uridylate kinase from Leptospira borgpetersenii serovar Hardjo-bovis (strain JB197).